Here is a 156-residue protein sequence, read N- to C-terminus: Small ribosomal subunit protein uS7 (156 aa).

It belongs to the universal ribosomal protein uS7 family. In terms of assembly, part of the 30S ribosomal subunit. Contacts proteins S9 and S11.

In terms of biological role, one of the primary rRNA binding proteins, it binds directly to 16S rRNA where it nucleates assembly of the head domain of the 30S subunit. Is located at the subunit interface close to the decoding center, probably blocks exit of the E-site tRNA. The chain is Small ribosomal subunit protein uS7 from Staphylococcus carnosus (strain TM300).